A 172-amino-acid chain; its full sequence is Myosin regulatory light polypeptide 9 (172 aa).

The span at 1–16 (MSSKRAKAKTTKKRPQ) shows a compositional bias: basic residues. Positions 1–20 (MSSKRAKAKTTKKRPQRATS) are disordered. An N-acetylserine modification is found at serine 2. Threonine 19 bears the Phosphothreonine; by MLCK, CIT and ROCK2 mark. Serine 20 is modified (phosphoserine; by CDC42BP, CIT, MLCK, PAK1, ROCK1, ROCK2, DAPK1, DAPK2 and ZIPK/DAPK3). EF-hand domains lie at 29-64 (SQIQ…LGKN), 98-133 (DPED…MGDR), and 134-169 (FTDE…GAKD). 4 residues coordinate Ca(2+): aspartate 42, asparagine 44, aspartate 46, and aspartate 53.

Myosin is a hexamer of 2 heavy chains and 4 light chains: interacts with myosin heavy chain MYO19. Interacts with LUZP1; the interaction results in inhibition of phosphorylation of MYL9 by DAPK3. In terms of processing, phosphorylation increases the actin-activated myosin ATPase activity and thereby regulates the contractile activity. It is required to generate the driving force in the migration of the cells but not necessary for localization of myosin-2 at the leading edge. Phosphorylation is required for myotube formation. Phosphorylated by DAPK3; DAPK3-mediated phosphorylation is inhibited by LUZP1. As to expression, smooth muscle tissues and in some, but not all, nonmuscle cells.

The protein resides in the cytoplasm. The protein localises to the cytoskeleton. Its subcellular location is the cell cortex. Functionally, myosin regulatory subunit that plays an important role in regulation of both smooth muscle and nonmuscle cell contractile activity via its phosphorylation. Implicated in cytokinesis, receptor capping, and cell locomotion. In myoblasts, may regulate PIEZO1-dependent cortical actomyosin assembly involved in myotube formation. The sequence is that of Myosin regulatory light polypeptide 9 (MYL9) from Homo sapiens (Human).